The sequence spans 368 residues: Cyclic di-GMP phosphodiesterase TM_0186 (368 aa).

The Response regulatory domain occupies 2–114; the sequence is TVLIVEDDDI…LLRLKITHAL (113 aa). Position 49 is a 4-aspartylphosphate (Asp49). The region spanning 148–345 is the HD-GYP domain; it reads YEDFLFEVLE…ITDVYRREKD (198 aa). A divalent metal cation contacts are provided by Glu169, His173, His205, Asp206, His234, His260, His261, and Asp289. The tract at residues 341–368 is disordered; the sequence is RREKDEDTSHNGGRSHQSSPGEGVEGIR. Residues 350-360 are compositionally biased toward polar residues; it reads HNGGRSHQSSP.

The enzyme catalyses 3',3'-c-di-GMP + 2 H2O = 2 GMP + 2 H(+). With respect to regulation, can function in vivo with either divalent iron or manganese occupying di- and trimetal sites. Dimetal is necessary and sufficient to catalyze conversion of c-di-GMP to pGpG, but conversion of pGpG to GMP requires an occupied trimetal site. Functionally, phosphodiesterase (PDE) that catalyzes the hydrolysis of cyclic diguanylate (c-di-GMP) to GMP. Hydrolyzes c-di-GMP to GMP in a two-step reaction, via the linear intermediate 5'-phosphoguanylyl(3'-&gt;5')guanosine (pGpG). In Thermotoga maritima (strain ATCC 43589 / DSM 3109 / JCM 10099 / NBRC 100826 / MSB8), this protein is Cyclic di-GMP phosphodiesterase TM_0186.